A 332-amino-acid chain; its full sequence is tRNA(Ile)-lysidine synthase (332 aa).

39 to 44 (SGGADS) provides a ligand contact to ATP.

This sequence belongs to the tRNA(Ile)-lysidine synthase family.

It localises to the cytoplasm. The catalysed reaction is cytidine(34) in tRNA(Ile2) + L-lysine + ATP = lysidine(34) in tRNA(Ile2) + AMP + diphosphate + H(+). In terms of biological role, ligates lysine onto the cytidine present at position 34 of the AUA codon-specific tRNA(Ile) that contains the anticodon CAU, in an ATP-dependent manner. Cytidine is converted to lysidine, thus changing the amino acid specificity of the tRNA from methionine to isoleucine. This Leifsonia xyli subsp. xyli (strain CTCB07) protein is tRNA(Ile)-lysidine synthase.